The primary structure comprises 426 residues: Serine hydroxymethyltransferase (426 aa).

Residues Leu-113 and 117–119 (GHL) each bind (6S)-5,6,7,8-tetrahydrofolate. Lys-222 carries the post-translational modification N6-(pyridoxal phosphate)lysine. Position 363–365 (363–365 (SPF)) interacts with (6S)-5,6,7,8-tetrahydrofolate.

The protein belongs to the SHMT family. As to quaternary structure, homodimer. Requires pyridoxal 5'-phosphate as cofactor.

The protein localises to the cytoplasm. The catalysed reaction is (6R)-5,10-methylene-5,6,7,8-tetrahydrofolate + glycine + H2O = (6S)-5,6,7,8-tetrahydrofolate + L-serine. Its pathway is one-carbon metabolism; tetrahydrofolate interconversion. It participates in amino-acid biosynthesis; glycine biosynthesis; glycine from L-serine: step 1/1. Catalyzes the reversible interconversion of serine and glycine with tetrahydrofolate (THF) serving as the one-carbon carrier. This reaction serves as the major source of one-carbon groups required for the biosynthesis of purines, thymidylate, methionine, and other important biomolecules. Also exhibits THF-independent aldolase activity toward beta-hydroxyamino acids, producing glycine and aldehydes, via a retro-aldol mechanism. The polypeptide is Serine hydroxymethyltransferase (Azobacteroides pseudotrichonymphae genomovar. CFP2).